The sequence spans 274 residues: MAIKTYKPTSPGRRAQTCSTFEEITACKPERSLVENLKKSGGRNSNGRITSRNVGGGHKQKYRIIDFRRDKTEIPAKVATIEYDPCRSARIALLNYADGEKRYILAPLSLKVGDTVISSEQADIKPGNALPIRCIPLGTIIHNIELKIGKGAQLARSAGTFAQLMAKEGKYGQVKLPSGEVRMILMDCKATIGQVGNADHENVSIGKAGRSRWLGVRPHVRGVAMNPVDHPHGGGEGRTSGGRHPVTPWGIPTKGYKTRTNKRSTPFIVKKRTK.

The segment at 224 to 259 (AMNPVDHPHGGGEGRTSGGRHPVTPWGIPTKGYKTR) is disordered.

Belongs to the universal ribosomal protein uL2 family. In terms of assembly, part of the 50S ribosomal subunit. Forms a bridge to the 30S subunit in the 70S ribosome.

One of the primary rRNA binding proteins. Required for association of the 30S and 50S subunits to form the 70S ribosome, for tRNA binding and peptide bond formation. It has been suggested to have peptidyltransferase activity; this is somewhat controversial. Makes several contacts with the 16S rRNA in the 70S ribosome. The protein is Large ribosomal subunit protein uL2 of Citrifermentans bemidjiense (strain ATCC BAA-1014 / DSM 16622 / JCM 12645 / Bem) (Geobacter bemidjiensis).